A 505-amino-acid chain; its full sequence is Histidine ammonia-lyase (505 aa).

A cross-link (5-imidazolinone (Ala-Gly)) is located at residues 141 to 143; the sequence is ASG. Ser-142 is modified (2,3-didehydroalanine (Ser)).

The protein belongs to the PAL/histidase family. Contains an active site 4-methylidene-imidazol-5-one (MIO), which is formed autocatalytically by cyclization and dehydration of residues Ala-Ser-Gly.

The protein localises to the cytoplasm. The catalysed reaction is L-histidine = trans-urocanate + NH4(+). Its pathway is amino-acid degradation; L-histidine degradation into L-glutamate; N-formimidoyl-L-glutamate from L-histidine: step 1/3. The sequence is that of Histidine ammonia-lyase from Bacillus cereus (strain AH187).